The chain runs to 76 residues: UPF0352 protein ECA2748 (76 aa).

It belongs to the UPF0352 family.

This Pectobacterium atrosepticum (strain SCRI 1043 / ATCC BAA-672) (Erwinia carotovora subsp. atroseptica) protein is UPF0352 protein ECA2748.